Here is a 158-residue protein sequence, read N- to C-terminus: Transcription elongation factor GreA (158 aa).

The stretch at 3 to 75 (TEKTYPMTQE…TQLENMIRNA (73 aa)) forms a coiled coil.

Belongs to the GreA/GreB family.

Necessary for efficient RNA polymerase transcription elongation past template-encoded arresting sites. The arresting sites in DNA have the property of trapping a certain fraction of elongating RNA polymerases that pass through, resulting in locked ternary complexes. Cleavage of the nascent transcript by cleavage factors such as GreA or GreB allows the resumption of elongation from the new 3'terminus. GreA releases sequences of 2 to 3 nucleotides. The polypeptide is Transcription elongation factor GreA (Bacillus cytotoxicus (strain DSM 22905 / CIP 110041 / 391-98 / NVH 391-98)).